The sequence spans 172 residues: Transcriptional repressor NrdR (172 aa).

A zinc finger lies at 3–34 (CPYCRNTDTRVLDSRVADDGGSIRRRRTCSAC). In terms of domain architecture, ATP-cone spans 46–136 (LTVLKRSGAS…VYRAFESADD (91 aa)).

It belongs to the NrdR family. Zn(2+) is required as a cofactor.

In terms of biological role, negatively regulates transcription of bacterial ribonucleotide reductase nrd genes and operons by binding to NrdR-boxes. The chain is Transcriptional repressor NrdR from Nocardioides sp. (strain ATCC BAA-499 / JS614).